Here is a 210-residue protein sequence, read N- to C-terminus: Leucyl/phenylalanyl-tRNA--protein transferase (210 aa).

The protein belongs to the L/F-transferase family.

It is found in the cytoplasm. It catalyses the reaction N-terminal L-lysyl-[protein] + L-leucyl-tRNA(Leu) = N-terminal L-leucyl-L-lysyl-[protein] + tRNA(Leu) + H(+). The enzyme catalyses N-terminal L-arginyl-[protein] + L-leucyl-tRNA(Leu) = N-terminal L-leucyl-L-arginyl-[protein] + tRNA(Leu) + H(+). The catalysed reaction is L-phenylalanyl-tRNA(Phe) + an N-terminal L-alpha-aminoacyl-[protein] = an N-terminal L-phenylalanyl-L-alpha-aminoacyl-[protein] + tRNA(Phe). Functionally, functions in the N-end rule pathway of protein degradation where it conjugates Leu, Phe and, less efficiently, Met from aminoacyl-tRNAs to the N-termini of proteins containing an N-terminal arginine or lysine. This Deinococcus radiodurans (strain ATCC 13939 / DSM 20539 / JCM 16871 / CCUG 27074 / LMG 4051 / NBRC 15346 / NCIMB 9279 / VKM B-1422 / R1) protein is Leucyl/phenylalanyl-tRNA--protein transferase.